The following is a 453-amino-acid chain: Ribulose bisphosphate carboxylase large chain (453 aa).

Positions 1–2 (MS) are excised as a propeptide. P3 bears the N-acetylproline mark. K14 is subject to N6,N6,N6-trimethyllysine. Substrate-binding residues include N123 and T173. Catalysis depends on K175, which acts as the Proton acceptor. Residue K177 coordinates substrate. The Mg(2+) site is built by K201, D203, and E204. K201 carries the post-translational modification N6-carboxylysine. H294 acts as the Proton acceptor in catalysis. Residues R295, H327, and S379 each coordinate substrate.

It belongs to the RuBisCO large chain family. Type I subfamily. Heterohexadecamer of 8 large chains and 8 small chains; disulfide-linked. The disulfide link is formed within the large subunit homodimers. Mg(2+) is required as a cofactor. Post-translationally, the disulfide bond which can form in the large chain dimeric partners within the hexadecamer appears to be associated with oxidative stress and protein turnover.

It localises to the plastid. It is found in the chloroplast. The catalysed reaction is 2 (2R)-3-phosphoglycerate + 2 H(+) = D-ribulose 1,5-bisphosphate + CO2 + H2O. The enzyme catalyses D-ribulose 1,5-bisphosphate + O2 = 2-phosphoglycolate + (2R)-3-phosphoglycerate + 2 H(+). In terms of biological role, ruBisCO catalyzes two reactions: the carboxylation of D-ribulose 1,5-bisphosphate, the primary event in carbon dioxide fixation, as well as the oxidative fragmentation of the pentose substrate in the photorespiration process. Both reactions occur simultaneously and in competition at the same active site. This Asperula laevigata (Smooth woodruff) protein is Ribulose bisphosphate carboxylase large chain.